A 290-amino-acid polypeptide reads, in one-letter code: Acetylglutamate kinase (290 aa).

Residues 60–61 (GG), R82, and N185 contribute to the substrate site.

The protein belongs to the acetylglutamate kinase family. ArgB subfamily.

It is found in the cytoplasm. It carries out the reaction N-acetyl-L-glutamate + ATP = N-acetyl-L-glutamyl 5-phosphate + ADP. It participates in amino-acid biosynthesis; L-arginine biosynthesis; N(2)-acetyl-L-ornithine from L-glutamate: step 2/4. Its function is as follows. Catalyzes the ATP-dependent phosphorylation of N-acetyl-L-glutamate. The chain is Acetylglutamate kinase from Archaeoglobus fulgidus (strain ATCC 49558 / DSM 4304 / JCM 9628 / NBRC 100126 / VC-16).